The chain runs to 330 residues: Pantothenate synthetase 2 (330 aa).

The active-site Proton donor is the His-55. Residues 167-170, Val-196, and 204-207 contribute to the ATP site; these read GEKD and ASSR.

Belongs to the pantothenate synthetase family. In terms of assembly, homodimer.

It is found in the cytoplasm. It carries out the reaction (R)-pantoate + beta-alanine + ATP = (R)-pantothenate + AMP + diphosphate + H(+). The protein operates within cofactor biosynthesis; (R)-pantothenate biosynthesis; (R)-pantothenate from (R)-pantoate and beta-alanine: step 1/1. Functionally, catalyzes the condensation of pantoate with beta-alanine in an ATP-dependent reaction via a pantoyl-adenylate intermediate. This chain is Pantothenate synthetase 2, found in Frankia alni (strain DSM 45986 / CECT 9034 / ACN14a).